Here is a 209-residue protein sequence, read N- to C-terminus: MVNFVSAGLFRCLPVSCPEDLLVEELVDGLLSLEEELKDKEEEEAVLDGLLSLEEESRGRLRRGPPGEKAPPRGETHRDRQRRAEEKRKRKKEREKEEEKQTAEYLKRKEEEKARRRRRAEKKAADVARRKQEEQERRERKWRQGAEKAKQHSARKEKMQELGIDGYTRQLEGEVESLEAERRKLLQEKEDLMGEVNYWQGRLEAMWLQ.

The segment at 48 to 162 (DGLLSLEEES…SARKEKMQEL (115 aa)) is disordered. Composition is skewed to basic and acidic residues over residues 70-87 (APPRGETHRDRQRRAEEK) and 94-114 (REKEEEKQTAEYLKRKEEEKA). Residues 87-92 (KRKRKK) carry the Nuclear localization signal 1 motif. Short sequence motifs (nuclear localization signal) lie at residues 116–120 (RRRRA) and 137–141 (RRERK). Over residues 122 to 160 (KKAADVARRKQEEQERRERKWRQGAEKAKQHSARKEKMQ) the composition is skewed to basic and acidic residues.

The protein belongs to the HTLV-1 HBZ protein family. In terms of assembly, interacts with host ATF4; this interaction inhibits viral RNA transcriptional activation by preventing ATF4 binding to Tax-responsive elements. Interacts with host CREB1; this interaction inhibits host CREB1 transcriptional activity. Interacts with host JUN, JUNB and JUND. Interacts with host EP300.

It localises to the host nucleus. In terms of biological role, contributes to the regulation of viral RNA transcription by interacting with host proteins involved in transcriptional activation such as ATF4, or CREB1, and by inhibiting their activity. Additionally, HBZ suppresses host NF-kappa-B-driven transcription mediated by host RELA as well as transcription of some classical NF-kappa-B target genes, including IL8, IL2RA, IRF4, VCAM1, and VEGFA. This chain is HTLV-1 basic zipper factor (HBZ), found in Homo sapiens (Human).